The chain runs to 331 residues: Polysaccharide lyase (331 aa).

A signal peptide spans 1–22 (MSLPLRLALLPTLLASASAFAA). Cysteine 23 is lipidated: N-palmitoyl cysteine. The S-diacylglycerol cysteine moiety is linked to residue cysteine 23.

Belongs to the polysaccharide lyase 5 family.

Its subcellular location is the cell outer membrane. The enzyme catalyses Eliminative cleavage of alginate to give oligosaccharides with 4-deoxy-alpha-L-erythro-hex-4-enuronosyl groups at their non-reducing ends and beta-D-mannuronate at their reducing end.. The catalysed reaction is [hyaluronan](n) = n 3-(4-deoxy-beta-D-gluc-4-enuronosyl)-N-acetyl-D-glucosamine + H2O. It catalyses the reaction Eliminative cleavage of (1-&gt;4)-beta-D-glucuronans to give oligosaccharides with 4-deoxy-beta-D-gluc-4-enuronosyl groups at their non-reducing ends. Complete degradation of glucuronans results in the formation of tetrasaccharides.. Is inhibited by mono- and divalent cations as well as L-ascorbic acid 6-hexadecanoate. Its function is as follows. Polysaccharide lyase that catalyzes the depolymerization of several anionic polysaccharides via a beta-elimination mechanism. Exhibits broad substrate specificity, catalyzing the degradation of not only alginate and poly-beta-D-mannuronate (poly-ManA), but poly-beta-D-glucuronate (poly-GlcA or poly-GlcUA) and hyaluronate (HA) as well. The oligosaccharide products formed by enzymatic cleavage are comprised mainly of disaccharides, with a lower abundance of trimers and pentamers. Is not active on poly-D-galacturonate, heparin and heparin sulfate. This is Polysaccharide lyase from Stenotrophomonas maltophilia (strain K279a).